The following is a 202-amino-acid chain: Protein-methionine-sulfoxide reductase heme-binding subunit MsrQ (202 aa).

The next 6 membrane-spanning stretches (helical) occupy residues 8–28, 42–62, 75–95, 110–130, 147–167, and 169–189; these read LAVF…AWIF, LGLG…LQKL, LGLW…VFIL, PYII…ITSN, LVYL…RADL, and EWTL…PSIA.

The protein belongs to the MsrQ family. Heterodimer of a catalytic subunit (MsrP) and a heme-binding subunit (MsrQ). Requires FMN as cofactor. It depends on heme b as a cofactor.

It is found in the cell inner membrane. Its function is as follows. Part of the MsrPQ system that repairs oxidized periplasmic proteins containing methionine sulfoxide residues (Met-O), using respiratory chain electrons. Thus protects these proteins from oxidative-stress damage caused by reactive species of oxygen and chlorine generated by the host defense mechanisms. MsrPQ is essential for the maintenance of envelope integrity under bleach stress, rescuing a wide series of structurally unrelated periplasmic proteins from methionine oxidation. MsrQ provides electrons for reduction to the reductase catalytic subunit MsrP, using the quinone pool of the respiratory chain. In Pseudomonas paraeruginosa (strain DSM 24068 / PA7) (Pseudomonas aeruginosa (strain PA7)), this protein is Protein-methionine-sulfoxide reductase heme-binding subunit MsrQ.